The primary structure comprises 670 residues: DNA mismatch repair protein MutL (670 aa).

The disordered stretch occupies residues S363–H451. Residues E379 to A389 show a composition bias toward basic and acidic residues.

The protein belongs to the DNA mismatch repair MutL/HexB family.

This protein is involved in the repair of mismatches in DNA. It is required for dam-dependent methyl-directed DNA mismatch repair. May act as a 'molecular matchmaker', a protein that promotes the formation of a stable complex between two or more DNA-binding proteins in an ATP-dependent manner without itself being part of a final effector complex. In Syntrophobacter fumaroxidans (strain DSM 10017 / MPOB), this protein is DNA mismatch repair protein MutL.